The chain runs to 443 residues: ATP-dependent protease ATPase subunit HslU (443 aa).

Residues valine 18 and 60 to 65 (GVGKTE) each bind ATP. A disordered region spans residues 136 to 158 (LPPPRDFNEDSQRTNADSSTRQL). Over residues 148 to 157 (RTNADSSTRQ) the composition is skewed to polar residues. 3 residues coordinate ATP: aspartate 256, glutamate 321, and arginine 393.

This sequence belongs to the ClpX chaperone family. HslU subfamily. In terms of assembly, a double ring-shaped homohexamer of HslV is capped on each side by a ring-shaped HslU homohexamer. The assembly of the HslU/HslV complex is dependent on binding of ATP.

The protein localises to the cytoplasm. Functionally, ATPase subunit of a proteasome-like degradation complex; this subunit has chaperone activity. The binding of ATP and its subsequent hydrolysis by HslU are essential for unfolding of protein substrates subsequently hydrolyzed by HslV. HslU recognizes the N-terminal part of its protein substrates and unfolds these before they are guided to HslV for hydrolysis. The chain is ATP-dependent protease ATPase subunit HslU from Marinobacter nauticus (strain ATCC 700491 / DSM 11845 / VT8) (Marinobacter aquaeolei).